The sequence spans 561 residues: DNA ligase B (561 aa).

The active-site N6-AMP-lysine intermediate is Lys125.

Belongs to the NAD-dependent DNA ligase family. LigB subfamily.

It carries out the reaction NAD(+) + (deoxyribonucleotide)n-3'-hydroxyl + 5'-phospho-(deoxyribonucleotide)m = (deoxyribonucleotide)n+m + AMP + beta-nicotinamide D-nucleotide.. Catalyzes the formation of phosphodiester linkages between 5'-phosphoryl and 3'-hydroxyl groups in double-stranded DNA using NAD as a coenzyme and as the energy source for the reaction. The protein is DNA ligase B of Salmonella heidelberg (strain SL476).